The primary structure comprises 76 residues: Envelope small membrane protein (76 aa).

Over 1–14 (MLQLVNDNGLVVNV) the chain is Virion surface. A helical membrane pass occupies residues 15–35 (ILWLFVLFFLLIISITFVQLV). Over 36-76 (NLCFTCHRLCNSAVYTPIGRLYRVYKSYMRIDPLPSTVIDV) the chain is Intravirion.

This sequence belongs to the alphacoronaviruses E protein family. In terms of assembly, homopentamer. Interacts with membrane protein M in the budding compartment of the host cell, which is located between endoplasmic reticulum and the Golgi complex. Interacts with Nucleoprotein. Interacts with host IRF3; this interaction inhibits type I IFN production.

It is found in the host Golgi apparatus membrane. The protein resides in the host endoplasmic reticulum. Functionally, plays a central role in virus morphogenesis and assembly. Acts as a viroporin and self-assembles in host membranes forming pentameric protein-lipid pores that allow ion transport. Also plays a role in the induction of apoptosis. Counteracts the production of type I interferon by interacting with host IRF3 component and preventing its translocation to the host nucleus. This is Envelope small membrane protein from Sus scrofa (Pig).